We begin with the raw amino-acid sequence, 285 residues long: NADPH-dependent 7-cyano-7-deazaguanine reductase (285 aa).

Position 80 to 82 (80 to 82 (VES)) interacts with substrate. 82-83 (SK) is an NADPH binding site. Residue Cys-191 is the Thioimide intermediate of the active site. The Proton donor role is filled by Asp-198. A substrate-binding site is contributed by 231–232 (HE). Position 260 to 261 (260 to 261 (RG)) interacts with NADPH.

Belongs to the GTP cyclohydrolase I family. QueF type 2 subfamily. In terms of assembly, homodimer.

It localises to the cytoplasm. It catalyses the reaction 7-aminomethyl-7-carbaguanine + 2 NADP(+) = 7-cyano-7-deazaguanine + 2 NADPH + 3 H(+). It functions in the pathway tRNA modification; tRNA-queuosine biosynthesis. Its function is as follows. Catalyzes the NADPH-dependent reduction of 7-cyano-7-deazaguanine (preQ0) to 7-aminomethyl-7-deazaguanine (preQ1). The sequence is that of NADPH-dependent 7-cyano-7-deazaguanine reductase from Psychrobacter cryohalolentis (strain ATCC BAA-1226 / DSM 17306 / VKM B-2378 / K5).